The sequence spans 324 residues: Polycomb complex protein BMI-1 (324 aa).

The segment at 18 to 57 (CVLCGGYFIDATTIIECLHSFCKTCIVRYLETSKYCPICD) adopts an RING-type zinc-finger fold. The Nuclear localization signal motif lies at 81-95 (KLVPGLFKNEMKRRR). Positions 160–180 (RYLRCPAAMTVMHLRKFLRSK) are interaction with PHC2. Positions 162 to 226 (LRCPAAMTVM…GPLPLKYRVR (65 aa)) are interaction with E4F1. The segment at 232-324 (MKMSHQRDGL…LNGSSATSSG (93 aa)) is disordered. A compositionally biased stretch (low complexity) spans 264–276 (PSTSSCLPSPSTP). Residues 277–307 (VQSPHPQFPHISSTMNGTSNSPSANHQSSFA) show a composition bias toward polar residues. Over residues 313-324 (SSLNGSSATSSG) the composition is skewed to low complexity.

In terms of assembly, component of a PRC1-like complex. Identified in a PRC1-like HPRC-H complex with CBX2, CBX4, CBX8, PHC1, PHC2, PHC3, RING1 and RNF2. Interacts with RNF2/RING2. Interacts with RING1. Part of a complex that contains RNF2, UB2D3 and BMI1, where RNF2 and BMI1 form a tight heterodimer, and UB2D3 interacts only with RNF2. The complex composed of RNF2, UB2D3 and BMI1 binds nucleosomes, and has activity only with nucleosomal histone H2A. Interacts with CBX7 and CBX8. Interacts with SPOP. Part of a complex consisting of BMI1, CUL3 and SPOP. Interacts with E4F1. Interacts with PHC2. Interacts with zinc finger protein ZNF277. May be part of a complex including at least ZNF277, BMI1 and RNF2/RING2. In terms of processing, may be polyubiquitinated; which does not lead to proteasomal degradation. Monoubiquitinated. Detected in most organs with high expression levels in thymus, heart, brain and testis.

It is found in the nucleus. The protein resides in the cytoplasm. In terms of biological role, component of a Polycomb group (PcG) multiprotein PRC1-like complex, a complex class required to maintain the transcriptionally repressive state of many genes, including Hox genes, throughout development. PcG PRC1 complex acts via chromatin remodeling and modification of histones; it mediates monoubiquitination of histone H2A 'Lys-119', rendering chromatin heritably changed in its expressibility. The complex composed of RNF2, UB2D3 and BMI1 binds nucleosomes, and has activity only with nucleosomal histone H2A. In the PRC1-like complex, regulates the E3 ubiquitin-protein ligase activity of RNF2/RING2. In Mus musculus (Mouse), this protein is Polycomb complex protein BMI-1 (Bmi1).